We begin with the raw amino-acid sequence, 203 residues long: Urease accessory protein UreG (203 aa).

14–21 (GPVGSGKT) is a GTP binding site.

It belongs to the SIMIBI class G3E GTPase family. UreG subfamily. As to quaternary structure, homodimer. UreD, UreF and UreG form a complex that acts as a GTP-hydrolysis-dependent molecular chaperone, activating the urease apoprotein by helping to assemble the nickel containing metallocenter of UreC. The UreE protein probably delivers the nickel.

It localises to the cytoplasm. Functionally, facilitates the functional incorporation of the urease nickel metallocenter. This process requires GTP hydrolysis, probably effectuated by UreG. This chain is Urease accessory protein UreG, found in Rhizobium meliloti (strain 1021) (Ensifer meliloti).